A 577-amino-acid polypeptide reads, in one-letter code: Protein CBFA2T1 (577 aa).

The span at 1 to 10 (MPDRTEKHST) shows a compositional bias: basic and acidic residues. A disordered region spans residues 1–87 (MPDRTEKHST…SSSSLANQQL (87 aa)). Ser14 bears the Phosphoserine mark. Residues 42–59 (SSFTPTTLTNGTSHSPTA) show a composition bias toward polar residues. Positions 68–87 (NGFSNGPSSSSSSSLANQQL) are enriched in low complexity. The 96-residue stretch at 93 to 188 (ARQLSKLKRF…NPAQYLAQHE (96 aa)) folds into the TAFH domain. Residues 203 to 271 (SELLLDVNEN…LPHPTPPPPQ (69 aa)) are disordered. Residues 211 to 237 (ENGKRRTPDRTKENGFDREPLHSEHPS) show a composition bias toward basic and acidic residues. A compositionally biased stretch (polar residues) spans 244–258 (SPGQRYSPNNGLSYQ). A compositionally biased stretch (pro residues) spans 262–271 (LPHPTPPPPQ). Residues 310–356 (QEEMIDHRLTDREWAEEWKHLDHLLNCIMDMVEKTRRSLTVLRRCQE) are important for oligomerization. The segment at 310–356 (QEEMIDHRLTDREWAEEWKHLDHLLNCIMDMVEKTRRSLTVLRRCQE) is nervy homology region 2 (NHR2). Residues 374–396 (DLKKGGSSSSSHSRQQSPVNPDP) form a disordered region. Low complexity predominate over residues 380 to 390 (SSSSSHSRQQS). Residue Ser390 is modified to Phosphoserine. The nervy homology region 3 (NHR3) stretch occupies residues 416–465 (EEIWKKAEEAVNEVKRQAMTELQKAVSEAERKAHDMITTERAKMERTVAE). Zn(2+)-binding residues include Cys488, Cys491, Cys499, Cys502, Cys508, Cys512, His520, and Cys524. The MYND-type zinc finger occupies 488–524 (CWNCGRKASETCSGCNTARYCGSFCQHKDWEKHHHIC). The tract at residues 529–577 (QAPQQGDTPAVSSSVTPSSGAGSPMDTPPAATPRSTTPGTPSTIETTPR) is disordered. Low complexity-rich tracts occupy residues 536–553 (TPAV…GSPM) and 560–577 (TPRS…TTPR).

Belongs to the CBFA2T family. Homotetramer. Heterotetramer with CBFA2T2 and CBFA2T3. Interacts with TCF12, SIN3A, HDAC1, HDAC2, HDAC3, NCOR1 and NCOR2. Interacts with ATN1 (via its N-terminus); the interaction enhances the transcriptional repression.

Its subcellular location is the nucleus. Its function is as follows. Transcriptional corepressor which facilitates transcriptional repression via its association with DNA-binding transcription factors and recruitment of other corepressors and histone-modifying enzymes. Can repress the expression of MMP7 in a ZBTB33-dependent manner. Can repress transactivation mediated by TCF12. Acts as a negative regulator of adipogenesis. The protein is Protein CBFA2T1 (Runx1t1) of Mus musculus (Mouse).